The chain runs to 175 residues: Ribosome maturation factor RimM (175 aa).

Positions 96-175 (EGDYYWHDLI…TIEVDWDAGF (80 aa)) constitute a PRC barrel domain.

This sequence belongs to the RimM family. As to quaternary structure, binds ribosomal protein uS19.

It is found in the cytoplasm. An accessory protein needed during the final step in the assembly of 30S ribosomal subunit, possibly for assembly of the head region. Essential for efficient processing of 16S rRNA. May be needed both before and after RbfA during the maturation of 16S rRNA. It has affinity for free ribosomal 30S subunits but not for 70S ribosomes. This is Ribosome maturation factor RimM from Haemophilus influenzae (strain PittEE).